The chain runs to 149 residues: Large ribosomal subunit protein uL15 (149 aa).

Composition is skewed to basic residues over residues 1–14 (MPTHLSKTRKHRGH) and 21–30 (RVGKHRKHPG). The interval 1-42 (MPTHLSKTRKHRGHVSAGHGRVGKHRKHPGGRGLAGGQHHHR) is disordered.

The protein belongs to the universal ribosomal protein uL15 family.

The sequence is that of Large ribosomal subunit protein uL15 from Blumeria hordei (Barley powdery mildew).